The chain runs to 180 residues: Major urinary protein 6 (180 aa).

A signal peptide spans 1–18 (MKMLLLLCLGLTLVCVHA). Cysteines 82 and 175 form a disulfide.

It belongs to the calycin superfamily. Lipocalin family. Abundant in the urine of adult male mice but absent from that of females.

The protein localises to the secreted. Binds pheromones that are released from drying urine of males. These pheromones affect the sexual behavior of females. The chain is Major urinary protein 6 (Mup6) from Mus musculus (Mouse).